A 311-amino-acid polypeptide reads, in one-letter code: tRNA-cytidine(32) 2-sulfurtransferase (311 aa).

A PP-loop motif motif is present at residues 47-52; the sequence is SGGKDS. Residues Cys122, Cys125, and Cys213 each contribute to the [4Fe-4S] cluster site.

It belongs to the TtcA family. As to quaternary structure, homodimer. The cofactor is Mg(2+). [4Fe-4S] cluster is required as a cofactor.

It is found in the cytoplasm. The enzyme catalyses cytidine(32) in tRNA + S-sulfanyl-L-cysteinyl-[cysteine desulfurase] + AH2 + ATP = 2-thiocytidine(32) in tRNA + L-cysteinyl-[cysteine desulfurase] + A + AMP + diphosphate + H(+). Its pathway is tRNA modification. In terms of biological role, catalyzes the ATP-dependent 2-thiolation of cytidine in position 32 of tRNA, to form 2-thiocytidine (s(2)C32). The sulfur atoms are provided by the cysteine/cysteine desulfurase (IscS) system. The protein is tRNA-cytidine(32) 2-sulfurtransferase of Pectobacterium carotovorum subsp. carotovorum (strain PC1).